Consider the following 92-residue polypeptide: Small ribosomal subunit protein uS19 (92 aa).

The protein belongs to the universal ribosomal protein uS19 family.

Protein S19 forms a complex with S13 that binds strongly to the 16S ribosomal RNA. The polypeptide is Small ribosomal subunit protein uS19 (Aliivibrio fischeri (strain ATCC 700601 / ES114) (Vibrio fischeri)).